The chain runs to 430 residues: Protein translocase subunit SecY (430 aa).

The next 10 membrane-spanning stretches (helical) occupy residues 18–38, 68–88, 117–137, 148–168, 179–199, 215–235, 270–290, 308–328, 368–388, and 390–410; these read IFFT…PAPG, FSIF…MQLL, FAII…NNYL, MSYL…LWLG, GISI…LIQF, LQVA…VYVL, VIPV…TMFF, NIGM…YAFV, FVGS…TKFM, and LPQS…VAIE.

It belongs to the SecY/SEC61-alpha family. In terms of assembly, component of the Sec protein translocase complex. Heterotrimer consisting of SecY, SecE and SecG subunits. The heterotrimers can form oligomers, although 1 heterotrimer is thought to be able to translocate proteins. Interacts with the ribosome. Interacts with SecDF, and other proteins may be involved. Interacts with SecA.

It localises to the cell membrane. The central subunit of the protein translocation channel SecYEG. Consists of two halves formed by TMs 1-5 and 6-10. These two domains form a lateral gate at the front which open onto the bilayer between TMs 2 and 7, and are clamped together by SecE at the back. The channel is closed by both a pore ring composed of hydrophobic SecY resides and a short helix (helix 2A) on the extracellular side of the membrane which forms a plug. The plug probably moves laterally to allow the channel to open. The ring and the pore may move independently. This is Protein translocase subunit SecY from Staphylococcus carnosus (strain TM300).